Reading from the N-terminus, the 227-residue chain is Cytochrome c oxidase subunit 2 (227 aa).

At 1–26 (MATWSNLSLQDGASPLMEQLSFFHDH) the chain is on the mitochondrial intermembrane side. Residues 27–48 (TMIDLLLITMIVGYSLSYMLLT) form a helical membrane-spanning segment. At 49 to 62 (KYTNRNMLHGHLIE) the chain is on the mitochondrial matrix side. The helical transmembrane segment at 63-82 (TIWTALPAITLIFIALPSLR) threads the bilayer. The Mitochondrial intermembrane segment spans residues 83–227 (LLYLLDDSSD…LFIKWLSNMM (145 aa)). H161, C196, E198, C200, H204, and M207 together coordinate Cu cation. E198 contributes to the Mg(2+) binding site.

This sequence belongs to the cytochrome c oxidase subunit 2 family. Component of the cytochrome c oxidase (complex IV, CIV), a multisubunit enzyme composed of a catalytic core of 3 subunits and several supernumerary subunits. The complex exists as a monomer or a dimer and forms supercomplexes (SCs) in the inner mitochondrial membrane with ubiquinol-cytochrome c oxidoreductase (cytochrome b-c1 complex, complex III, CIII). It depends on Cu cation as a cofactor.

It is found in the mitochondrion inner membrane. The catalysed reaction is 4 Fe(II)-[cytochrome c] + O2 + 8 H(+)(in) = 4 Fe(III)-[cytochrome c] + 2 H2O + 4 H(+)(out). Its function is as follows. Component of the cytochrome c oxidase, the last enzyme in the mitochondrial electron transport chain which drives oxidative phosphorylation. The respiratory chain contains 3 multisubunit complexes succinate dehydrogenase (complex II, CII), ubiquinol-cytochrome c oxidoreductase (cytochrome b-c1 complex, complex III, CIII) and cytochrome c oxidase (complex IV, CIV), that cooperate to transfer electrons derived from NADH and succinate to molecular oxygen, creating an electrochemical gradient over the inner membrane that drives transmembrane transport and the ATP synthase. Cytochrome c oxidase is the component of the respiratory chain that catalyzes the reduction of oxygen to water. Electrons originating from reduced cytochrome c in the intermembrane space (IMS) are transferred via the dinuclear copper A center (CU(A)) of subunit 2 and heme A of subunit 1 to the active site in subunit 1, a binuclear center (BNC) formed by heme A3 and copper B (CU(B)). The BNC reduces molecular oxygen to 2 water molecules using 4 electrons from cytochrome c in the IMS and 4 protons from the mitochondrial matrix. The chain is Cytochrome c oxidase subunit 2 (COII) from Locusta migratoria (Migratory locust).